Here is an 87-residue protein sequence, read N- to C-terminus: Small ribosomal subunit protein uS15c (87 aa).

Belongs to the universal ribosomal protein uS15 family. In terms of assembly, part of the 30S ribosomal subunit.

It is found in the plastid. The protein resides in the chloroplast. This Amborella trichopoda protein is Small ribosomal subunit protein uS15c (rps15).